A 389-amino-acid chain; its full sequence is 26S proteasome non-ATPase regulatory subunit 6 (389 aa).

The PCI domain maps to 193-361 (DFKQAAELFL…EVVETNRPDS (169 aa)).

Belongs to the proteasome subunit S10 family. In terms of assembly, component of the 19S proteasome regulatory particle complex. The 26S proteasome consists of a 20S core particle (CP) and two 19S regulatory subunits (RP). The regulatory particle is made of a lid composed of 9 subunits including PSMD6, a base containing 6 ATPases and few additional components.

Component of the 26S proteasome, a multiprotein complex involved in the ATP-dependent degradation of ubiquitinated proteins. This complex plays a key role in the maintenance of protein homeostasis by removing misfolded or damaged proteins, which could impair cellular functions, and by removing proteins whose functions are no longer required. Therefore, the proteasome participates in numerous cellular processes, including cell cycle progression, apoptosis, or DNA damage repair. In Bos taurus (Bovine), this protein is 26S proteasome non-ATPase regulatory subunit 6 (PSMD6).